We begin with the raw amino-acid sequence, 534 residues long: Sodium-dependent lysophosphatidylcholine symporter 1 (534 aa).

The Cytoplasmic segment spans residues 1–39 (MAKGEGAESGSAAGLLPTSILQASERPVQVKKEPKKKQQ). A helical membrane pass occupies residues 40–69 (LSICNKLCYAVGGAPYQLTGCALGFFLQIY). Residues 70-80 (LLDVAKVEPLP) are Extracellular-facing. The helical transmembrane segment at 81-101 (ASIILFVGRAWDAFTDPLVGF) threads the bilayer. Residues 102 to 113 (CISKSSWTRLGR) lie on the Cytoplasmic side of the membrane. A helical transmembrane segment spans residues 114-133 (LMPWIIFSTPLAIIAYFLIW). Residues 134–148 (FVPDFPSGTESSHGF) are Extracellular-facing. The helical transmembrane segment at 149-173 (LWYLLFYCLFETLVTCFHVPYSALT) threads the bilayer. The Cytoplasmic portion of the chain corresponds to 174 to 180 (MFISTEQ). The helical transmembrane segment at 181-212 (SERDSATAYRMTVEVLGTVIGTAIQGQIVGQA) threads the bilayer. Topologically, residues 213–232 (KAPCLQDQNGSVVVSEVANR) are extracellular. A disulfide bridge connects residues Cys216 and Cys464. N-linked (GlcNAc...) asparagine glycans are attached at residues Asn221 and Asn231. A helical membrane pass occupies residues 233–266 (TQSTASLKDTQNAYLLAAGIIASIYVLCAFILIL). Residues 267–297 (GVREQRELYESQQAESMPFFQGLRLVMGHGP) lie on the Cytoplasmic side of the membrane. Residues 298–324 (YVKLIAGFLFTSLAFMLVEGNFALFCT) form a helical membrane-spanning segment. Residues 325–335 (YTLDFRNEFQN) are Extracellular-facing. Residues 336 to 354 (LLLAIMLSATFTIPIWQWF) traverse the membrane as a helical segment. The Cytoplasmic portion of the chain corresponds to 355-358 (LTRF). The helical transmembrane segment at 359-380 (GKKTAVYIGISSAVPFLILVAL) threads the bilayer. Residues 381–383 (MER) lie on the Extracellular side of the membrane. A helical membrane pass occupies residues 384–420 (NLIVTYVVAVAAGVSVAAAFLLPWSMLPDVIDDFHLK). The Cytoplasmic portion of the chain corresponds to 421–430 (HPHSPGTEPI). A helical transmembrane segment spans residues 431–457 (FFSFYVFFTKFASGVSLGVSTLSLDFA). Residues 458–469 (NYQRQGCSQPEQ) are Extracellular-facing. Residues 470-493 (VKFTLKMLVTMAPIILILLGLLLF) traverse the membrane as a helical segment. The Cytoplasmic segment spans residues 494–534 (KLYPIDEEKRRQNKKALQALREEASSSGCSDTDSTELASIL).

Belongs to the major facilitator superfamily. Post-translationally, N-glycosylated. As to expression, widely expressed. Exhibits an oscillatory pattern of expression in brown adipose tissue and liver consistent with a circadian rhythm. Enriched in brain micro-vessels, where it is specifically present in endothelium constituting the blood-brain barrier (at protein level).

Its subcellular location is the cell membrane. The protein resides in the endoplasmic reticulum membrane. The catalysed reaction is a 1-acyl-sn-glycero-3-phosphocholine(in) + Na(+)(in) = a 1-acyl-sn-glycero-3-phosphocholine(out) + Na(+)(out). It catalyses the reaction 1-(4Z,7Z,10Z,13Z,16Z,19Z-docosahexaenoyl)-sn-glycero-3-phosphocholine(in) + Na(+)(in) = 1-(4Z,7Z,10Z,13Z,16Z,19Z-docosahexaenoyl)-sn-glycero-3-phosphocholine(out) + Na(+)(out). It carries out the reaction 1-(9Z-octadecenoyl)-sn-glycero-3-phosphocholine(in) + Na(+)(in) = 1-(9Z-octadecenoyl)-sn-glycero-3-phosphocholine(out) + Na(+)(out). The enzyme catalyses 1-hexadecanoyl-sn-glycero-3-phosphocholine(in) + Na(+)(in) = 1-hexadecanoyl-sn-glycero-3-phosphocholine(out) + Na(+)(out). The catalysed reaction is a 1-acyl-sn-glycero-3-phosphoethanolamine(in) + Na(+)(in) = a 1-acyl-sn-glycero-3-phosphoethanolamine(out) + Na(+)(out). Its function is as follows. Sodium-dependent lysophosphatidylcholine (LPC) symporter, which plays an essential role for blood-brain barrier formation and function. Specifically expressed in endothelium of the blood-brain barrier of micro-vessels and transports LPC into the brain. Transport of LPC is essential because it constitutes the major mechanism by which docosahexaenoic acid (DHA), an omega-3 fatty acid that is essential for normal brain growth and cognitive function, enters the brain. Transports LPC carrying long-chain fatty acids such LPC oleate and LPC palmitate with a minimum acyl chain length of 14 carbons. Does not transport docosahexaenoic acid in unesterified fatty acid. Not required for central nervous system vascular morphogenesis. In Mus musculus (Mouse), this protein is Sodium-dependent lysophosphatidylcholine symporter 1.